Consider the following 381-residue polypeptide: Tetraacyldisaccharide 4'-kinase (381 aa).

Residue 78 to 85 (AVGGTGKT) participates in ATP binding.

This sequence belongs to the LpxK family.

It carries out the reaction a lipid A disaccharide + ATP = a lipid IVA + ADP + H(+). It participates in glycolipid biosynthesis; lipid IV(A) biosynthesis; lipid IV(A) from (3R)-3-hydroxytetradecanoyl-[acyl-carrier-protein] and UDP-N-acetyl-alpha-D-glucosamine: step 6/6. Functionally, transfers the gamma-phosphate of ATP to the 4'-position of a tetraacyldisaccharide 1-phosphate intermediate (termed DS-1-P) to form tetraacyldisaccharide 1,4'-bis-phosphate (lipid IVA). The protein is Tetraacyldisaccharide 4'-kinase of Syntrophobacter fumaroxidans (strain DSM 10017 / MPOB).